A 456-amino-acid polypeptide reads, in one-letter code: Phosphomannomutase (456 aa).

Catalysis depends on Ser-98, which acts as the Phosphoserine intermediate. Positions 98, 245, 247, and 249 each coordinate Mg(2+).

The protein belongs to the phosphohexose mutase family. Mg(2+) is required as a cofactor.

The catalysed reaction is alpha-D-mannose 1-phosphate = D-mannose 6-phosphate. The protein operates within nucleotide-sugar biosynthesis; GDP-alpha-D-mannose biosynthesis; alpha-D-mannose 1-phosphate from D-fructose 6-phosphate: step 2/2. Involved in the biosynthesis of the capsular polysaccharide colanic acid. In Escherichia coli (strain K12), this protein is Phosphomannomutase (manB).